A 139-amino-acid chain; its full sequence is Nucleoside diphosphate kinase (139 aa).

6 residues coordinate ATP: Lys9, Phe57, Arg85, Thr91, Arg102, and Asn112. The Pros-phosphohistidine intermediate role is filled by His115.

This sequence belongs to the NDK family. In terms of assembly, homotetramer. The cofactor is Mg(2+).

Its subcellular location is the cytoplasm. The catalysed reaction is a 2'-deoxyribonucleoside 5'-diphosphate + ATP = a 2'-deoxyribonucleoside 5'-triphosphate + ADP. It carries out the reaction a ribonucleoside 5'-diphosphate + ATP = a ribonucleoside 5'-triphosphate + ADP. Functionally, major role in the synthesis of nucleoside triphosphates other than ATP. The ATP gamma phosphate is transferred to the NDP beta phosphate via a ping-pong mechanism, using a phosphorylated active-site intermediate. This is Nucleoside diphosphate kinase from Neorickettsia sennetsu (strain ATCC VR-367 / Miyayama) (Ehrlichia sennetsu).